We begin with the raw amino-acid sequence, 218 residues long: MSSSKRRIETDVMKLLMSDHQVDLINDSMQEFHVKFLGPKDTPYENGVWRLHVELPDNYPYKSPSIGFVNKIFHPNIDIASGSICLDVINSTWSPLYDLINIVEWMIPGLLKEPNGSDPLNNEAATLQLRDKKLYEEKIKEYIDKYATKEKYQQMFGGDNDSDDSDSGGDLQEEDSDSDEDMDGTGVSSGDDSVDELSEDLSDIDVSDDDDYDEVANQ.

The region spanning 3-148 is the UBC core domain; it reads SSKRRIETDV…IKEYIDKYAT (146 aa). C85 acts as the Glycyl thioester intermediate in catalysis. A disordered region spans residues 154 to 218; it reads QMFGGDNDSD…DDDYDEVANQ (65 aa). 2 stretches are compositionally biased toward acidic residues: residues 160 to 183 and 192 to 218; these read NDSDDSDSGGDLQEEDSDSDEDMD and DSVDELSEDLSDIDVSDDDDYDEVANQ.

Belongs to the ubiquitin-conjugating enzyme family.

The protein localises to the cytoplasm. The enzyme catalyses S-ubiquitinyl-[E1 ubiquitin-activating enzyme]-L-cysteine + [E2 ubiquitin-conjugating enzyme]-L-cysteine = [E1 ubiquitin-activating enzyme]-L-cysteine + S-ubiquitinyl-[E2 ubiquitin-conjugating enzyme]-L-cysteine.. Its pathway is protein modification; protein ubiquitination. Its function is as follows. Catalyzes the covalent attachment of ubiquitin to other proteins. Required for the adaptation to the presence of glucose in the growth medium; mediates the degradation of enzymes involved in gluconeogenesis when cells are shifted to glucose-containing medium. Required for proteasome-dependent catabolite degradation of fructose-1,6-bisphosphatase (FBP1). This is Ubiquitin-conjugating enzyme E2-24 kDa (UBC8) from Saccharomyces cerevisiae (strain ATCC 204508 / S288c) (Baker's yeast).